A 599-amino-acid chain; its full sequence is DNA-directed RNA polymerase III subunit RPC3 (599 aa).

Residues 350-375 (PKKRSASNGDDERPTKKIKTEDSDDI) are disordered. A compositionally biased stretch (basic and acidic residues) spans 359 to 370 (DDERPTKKIKTE). Residues 528–549 (LIFSMAEILSNIQAFREDHKIL) form a leucine-zipper region.

Belongs to the RNA polymerase beta chain family. As to quaternary structure, component of the RNA polymerase III (Pol III) complex consisting of 17 subunits.

The protein localises to the nucleus. In terms of biological role, DNA-dependent RNA polymerase catalyzes the transcription of DNA into RNA using the four ribonucleoside triphosphates as substrates. Specific core component of RNA polymerase III which synthesizes small RNAs, such as 5S rRNA and tRNAs. This Scheffersomyces stipitis (strain ATCC 58785 / CBS 6054 / NBRC 10063 / NRRL Y-11545) (Yeast) protein is DNA-directed RNA polymerase III subunit RPC3 (RPC82).